The primary structure comprises 146 residues: Hemoglobin subunit beta-1 (146 aa).

The region spanning 2–146 is the Globin domain; sequence HWTAEEKQLI…VAHALARRYH (145 aa). Residues His63 and His92 each coordinate heme b.

This sequence belongs to the globin family. Heterotetramer of two alpha chains and two beta chains. Red blood cells.

Involved in oxygen transport from the lung to the various peripheral tissues. The chain is Hemoglobin subunit beta-1 (HBB1) from Iguana iguana (Common iguana).